The primary structure comprises 94 residues: Endoribonuclease VapD 2 (94 aa).

The protein belongs to the VapD ribonuclease family. In terms of assembly, homodimer.

Its function is as follows. Cleaves ssRNA, mostly between U:A. This Riemerella anatipestifer (Moraxella anatipestifer) protein is Endoribonuclease VapD 2.